We begin with the raw amino-acid sequence, 220 residues long: Deoxyribose-phosphate aldolase 1 (220 aa).

Asp-89 acts as the Proton donor/acceptor in catalysis. Lys-151 (schiff-base intermediate with acetaldehyde) is an active-site residue. Residue Lys-180 is the Proton donor/acceptor of the active site.

It belongs to the DeoC/FbaB aldolase family. DeoC type 1 subfamily.

It is found in the cytoplasm. The enzyme catalyses 2-deoxy-D-ribose 5-phosphate = D-glyceraldehyde 3-phosphate + acetaldehyde. The protein operates within carbohydrate degradation; 2-deoxy-D-ribose 1-phosphate degradation; D-glyceraldehyde 3-phosphate and acetaldehyde from 2-deoxy-alpha-D-ribose 1-phosphate: step 2/2. Functionally, catalyzes a reversible aldol reaction between acetaldehyde and D-glyceraldehyde 3-phosphate to generate 2-deoxy-D-ribose 5-phosphate. In Mesoplasma florum (strain ATCC 33453 / NBRC 100688 / NCTC 11704 / L1) (Acholeplasma florum), this protein is Deoxyribose-phosphate aldolase 1.